The sequence spans 303 residues: N-acetyl-D-glucosamine kinase (303 aa).

ATP contacts are provided by residues 4 to 11 (GFDIGGTK) and 133 to 140 (GVGGGLIF). Residues His-157, Cys-177, Cys-179, and Cys-184 each contribute to the Zn(2+) site.

This sequence belongs to the ROK (NagC/XylR) family. NagK subfamily.

It carries out the reaction N-acetyl-D-glucosamine + ATP = N-acetyl-D-glucosamine 6-phosphate + ADP + H(+). It participates in cell wall biogenesis; peptidoglycan recycling. Its function is as follows. Catalyzes the phosphorylation of N-acetyl-D-glucosamine (GlcNAc) derived from cell-wall degradation, yielding GlcNAc-6-P. The sequence is that of N-acetyl-D-glucosamine kinase from Escherichia coli O139:H28 (strain E24377A / ETEC).